The following is a 276-amino-acid chain: tRNA dimethylallyltransferase (276 aa).

The interaction with substrate tRNA stretch occupies residues 9–12 (DSLS).

The protein belongs to the IPP transferase family. As to quaternary structure, monomer. The cofactor is Mg(2+).

It carries out the reaction adenosine(37) in tRNA + dimethylallyl diphosphate = N(6)-dimethylallyladenosine(37) in tRNA + diphosphate. In terms of biological role, catalyzes the transfer of a dimethylallyl group onto the adenine at position 37 in tRNAs that read codons beginning with uridine, leading to the formation of N6-(dimethylallyl)adenosine (i(6)A). The sequence is that of tRNA dimethylallyltransferase (miaA) from Helicobacter pylori (strain G27).